The sequence spans 98 residues: Large ribosomal subunit protein uL23 (98 aa).

It belongs to the universal ribosomal protein uL23 family. In terms of assembly, part of the 50S ribosomal subunit. Contacts protein L29, and trigger factor when it is bound to the ribosome.

One of the early assembly proteins it binds 23S rRNA. One of the proteins that surrounds the polypeptide exit tunnel on the outside of the ribosome. Forms the main docking site for trigger factor binding to the ribosome. The polypeptide is Large ribosomal subunit protein uL23 (Lactobacillus delbrueckii subsp. bulgaricus (strain ATCC 11842 / DSM 20081 / BCRC 10696 / JCM 1002 / NBRC 13953 / NCIMB 11778 / NCTC 12712 / WDCM 00102 / Lb 14)).